Here is a 444-residue protein sequence, read N- to C-terminus: Tubulin gamma chain (444 aa).

Position 144 to 150 (144 to 150 (SGGTGSG)) interacts with GTP.

Belongs to the tubulin family.

Its subcellular location is the cytoplasm. It is found in the cytoskeleton. The protein localises to the microtubule organizing center. It localises to the centrosome. The protein resides in the cell junction. Its subcellular location is the hemidesmosome. It is found in the adherens junction. In terms of biological role, tubulin is the major constituent of microtubules. The gamma chain is found at microtubule organizing centers (MTOC) such as the spindle poles or the centrosome, suggesting that it is involved in the minus-end nucleation of microtubule assembly. This is Tubulin gamma chain (tbg-1) from Caenorhabditis elegans.